An 893-amino-acid polypeptide reads, in one-letter code: Nitrate reductase [NADPH] (893 aa).

The interval 1–83 (MSVTTQQPAV…KPTPDAHVPR (83 aa)) is disordered. Positions 55-65 (PDFPLPPPANP) are enriched in pro residues. Residues 71–83 (DIDKPTPDAHVPR) show a composition bias toward basic and acidic residues. C170 provides a ligand contact to Mo-molybdopterin. One can recognise a Cytochrome b5 heme-binding domain in the interval 536–611 (NRIVELDELK…MPAYHIGTLS (76 aa)). Positions 571 and 594 each coordinate heme. The region spanning 641 to 752 (RTWSKALLSS…KGPIGKFEYL (112 aa)) is the FAD-binding FR-type domain. Residues 695-698 (RSYT), 712-716 (LIKIY), 726-728 (KMT), S776, and T779 each bind FAD. Residue 863–872 (LVLVCGPEGL) coordinates NADP(+).

The protein belongs to the nitrate reductase family. Homodimer. It depends on FAD as a cofactor. Heme is required as a cofactor. Requires Mo-molybdopterin as cofactor.

The enzyme catalyses nitrite + NADP(+) + H2O = nitrate + NADPH + H(+). Functionally, nitrate reductase is a key enzyme involved in the first step of nitrate assimilation in plants, fungi and bacteria. This chain is Nitrate reductase [NADPH] (NIAD), found in Leptosphaeria maculans (Blackleg fungus).